A 712-amino-acid polypeptide reads, in one-letter code: Autophagy-related protein 13 (712 aa).

Disordered stretches follow at residues 388 to 443 (AGST…ETPP) and 568 to 611 (GSVG…DDDE). Residues 402-415 (SSVGSGSKYSSSFG) show a composition bias toward low complexity. The interval 412–420 (SSFGRIRRH) is ATG17-binding. The span at 424-439 (RRSESIDRTAKPRKSN) shows a compositional bias: basic and acidic residues. Positions 441 to 500 (TPPEDLLEFVKLLEDKKELNMKPSTILPQQDISSSLIKFQSMKPNNDTLSDNLSMSMSID) are ATG1-binding. Positions 576-585 (TNEDSKEDED) are enriched in acidic residues.

This sequence belongs to the ATG13 family. Fungi subfamily. In terms of assembly, hypophosphorylated form interacts with ATG1 to form the ATG1-ATG13 kinase complex. The ATG1-ATG13 complex interacts with the ATG17-ATG29-ATG31 complex through direct interaction with ATG17. Interacts with VAC8. Hyperphosphorylated under nutrient-rich conditions. Starvation and TOR inactivation results in ATG13 partial dephosphorylation leading to ATG1-binding. Dephosphorylation induces ATG17-binding.

It is found in the cytoplasm. Its subcellular location is the preautophagosomal structure. Its function is as follows. Activates the ATG1 kinase in a nutritional condition dependent manner through the TOR pathway, leading to autophagy. Involved in ATG9 and ATG23 cycling through the pre-autophagosomal structure. Also involved in cytoplasm to vacuole transport (Cvt) and more specifically in Cvt vesicle formation. Seems to play a role in the switching machinery regulating the conversion between the Cvt pathway and autophagy. Finally, ATG13 is also required for glycogen storage during stationary phase. This Kluyveromyces marxianus (strain DMKU3-1042 / BCC 29191 / NBRC 104275) (Yeast) protein is Autophagy-related protein 13.